A 367-amino-acid chain; its full sequence is Glutamate 5-kinase (367 aa).

K9 is a binding site for ATP. Substrate-binding residues include S49, D136, and N148. ATP contacts are provided by residues 168–169 (TD) and 210–216 (TGGMKSK). Residues 276–350 (SGQIEVDAGA…GMQSQDIQVR (75 aa)) enclose the PUA domain.

It belongs to the glutamate 5-kinase family.

The protein resides in the cytoplasm. The catalysed reaction is L-glutamate + ATP = L-glutamyl 5-phosphate + ADP. The protein operates within amino-acid biosynthesis; L-proline biosynthesis; L-glutamate 5-semialdehyde from L-glutamate: step 1/2. Catalyzes the transfer of a phosphate group to glutamate to form L-glutamate 5-phosphate. This is Glutamate 5-kinase from Bacillus cereus (strain G9842).